Here is a 1368-residue protein sequence, read N- to C-terminus: DNA-directed RNA polymerase subunit beta (1368 aa).

This sequence belongs to the RNA polymerase beta chain family. The RNAP catalytic core consists of 2 alpha, 1 beta, 1 beta' and 1 omega subunit. When a sigma factor is associated with the core the holoenzyme is formed, which can initiate transcription.

The catalysed reaction is RNA(n) + a ribonucleoside 5'-triphosphate = RNA(n+1) + diphosphate. Functionally, DNA-dependent RNA polymerase catalyzes the transcription of DNA into RNA using the four ribonucleoside triphosphates as substrates. This chain is DNA-directed RNA polymerase subunit beta, found in Burkholderia pseudomallei (strain K96243).